A 223-amino-acid polypeptide reads, in one-letter code: Imidazoleglycerol-phosphate dehydratase (223 aa).

This sequence belongs to the imidazoleglycerol-phosphate dehydratase family.

The enzyme catalyses D-erythro-1-(imidazol-4-yl)glycerol 3-phosphate = 3-(imidazol-4-yl)-2-oxopropyl phosphate + H2O. It functions in the pathway amino-acid biosynthesis; L-histidine biosynthesis; L-histidine from 5-phospho-alpha-D-ribose 1-diphosphate: step 6/9. The sequence is that of Imidazoleglycerol-phosphate dehydratase (HIS3) from Candida albicans (Yeast).